Consider the following 377-residue polypeptide: Chaperone protein DnaJ (377 aa).

Positions 5-70 (DYYQVLGVAK…QKRAAYDQYG (66 aa)) constitute a J domain. A CR-type zinc finger spans residues 137-215 (GYDTQIRVPS…CHGAGKTKET (79 aa)). Zn(2+) contacts are provided by cysteine 150, cysteine 153, cysteine 167, cysteine 170, cysteine 189, cysteine 192, cysteine 203, and cysteine 206. CXXCXGXG motif repeat units follow at residues 150 to 157 (CEICHGSG), 167 to 174 (CPTCNGSG), 189 to 196 (CPKCHGTG), and 203 to 210 (CTHCHGAG).

Belongs to the DnaJ family. In terms of assembly, homodimer. Requires Zn(2+) as cofactor.

The protein resides in the cytoplasm. Functionally, participates actively in the response to hyperosmotic and heat shock by preventing the aggregation of stress-denatured proteins and by disaggregating proteins, also in an autonomous, DnaK-independent fashion. Unfolded proteins bind initially to DnaJ; upon interaction with the DnaJ-bound protein, DnaK hydrolyzes its bound ATP, resulting in the formation of a stable complex. GrpE releases ADP from DnaK; ATP binding to DnaK triggers the release of the substrate protein, thus completing the reaction cycle. Several rounds of ATP-dependent interactions between DnaJ, DnaK and GrpE are required for fully efficient folding. Also involved, together with DnaK and GrpE, in the DNA replication of plasmids through activation of initiation proteins. The polypeptide is Chaperone protein DnaJ (Paraburkholderia phymatum (strain DSM 17167 / CIP 108236 / LMG 21445 / STM815) (Burkholderia phymatum)).